Reading from the N-terminus, the 77-residue chain is Small ribosomal subunit protein bS21 (77 aa).

Residues 55 to 77 form a disordered region; the sequence is RKLARKRAQREGLMSNGRISALR.

It belongs to the bacterial ribosomal protein bS21 family.

The protein is Small ribosomal subunit protein bS21 of Bartonella quintana (strain Toulouse) (Rochalimaea quintana).